Here is a 147-residue protein sequence, read N- to C-terminus: Hemoglobin subunit delta (147 aa).

The Globin domain occupies 3–147 (NLTAAEKTQV…VANALAHKYH (145 aa)). Residues His-64 and His-93 each coordinate heme b.

The protein belongs to the globin family. Heterotetramer of two delta chains and two alpha chains. As to expression, red blood cells.

This is Hemoglobin subunit delta (HBD) from Elephas maximus (Indian elephant).